The primary structure comprises 417 residues: Serine hydroxymethyltransferase (417 aa).

(6S)-5,6,7,8-tetrahydrofolate is bound by residues L121 and 125 to 127 (GHL). K229 is subject to N6-(pyridoxal phosphate)lysine. 355–357 (SPF) serves as a coordination point for (6S)-5,6,7,8-tetrahydrofolate.

The protein belongs to the SHMT family. As to quaternary structure, homodimer. Pyridoxal 5'-phosphate is required as a cofactor.

Its subcellular location is the cytoplasm. It carries out the reaction (6R)-5,10-methylene-5,6,7,8-tetrahydrofolate + glycine + H2O = (6S)-5,6,7,8-tetrahydrofolate + L-serine. It participates in one-carbon metabolism; tetrahydrofolate interconversion. Its pathway is amino-acid biosynthesis; glycine biosynthesis; glycine from L-serine: step 1/1. Functionally, catalyzes the reversible interconversion of serine and glycine with tetrahydrofolate (THF) serving as the one-carbon carrier. This reaction serves as the major source of one-carbon groups required for the biosynthesis of purines, thymidylate, methionine, and other important biomolecules. Also exhibits THF-independent aldolase activity toward beta-hydroxyamino acids, producing glycine and aldehydes, via a retro-aldol mechanism. This is Serine hydroxymethyltransferase from Shewanella denitrificans (strain OS217 / ATCC BAA-1090 / DSM 15013).